The sequence spans 180 residues: Shikimate kinase (180 aa).

14 to 19 contacts ATP; it reads GAGKSC. Residue serine 18 participates in Mg(2+) binding. The substrate site is built by aspartate 36, arginine 60, and glycine 82. Arginine 120 contacts ATP. Substrate is bound at residue arginine 139.

Belongs to the shikimate kinase family. Monomer. It depends on Mg(2+) as a cofactor.

It localises to the cytoplasm. The catalysed reaction is shikimate + ATP = 3-phosphoshikimate + ADP + H(+). The protein operates within metabolic intermediate biosynthesis; chorismate biosynthesis; chorismate from D-erythrose 4-phosphate and phosphoenolpyruvate: step 5/7. Functionally, catalyzes the specific phosphorylation of the 3-hydroxyl group of shikimic acid using ATP as a cosubstrate. This is Shikimate kinase from Xanthomonas campestris pv. campestris (strain 8004).